The following is a 530-amino-acid chain: Hyccin 2 (530 aa).

Threonine 30 and threonine 306 each carry phosphothreonine. Serine 321 and serine 341 each carry phosphoserine. Residues 328 to 410 (RREGAEGVNG…DSVVRKQYVQ (83 aa)) are disordered. Polar residues predominate over residues 353-373 (SGASLSSQPIGTKPSSSSQRG). Phosphoserine occurs at positions 430, 442, 444, and 491. Residues 502–530 (EGKELLSPGAPLTKQSRSPSFNMQLISQV) are disordered. The segment covering 514–530 (TKQSRSPSFNMQLISQV) has biased composition (polar residues).

It belongs to the Hyccin family. Component of a phosphatidylinositol 4-kinase (PI4K) complex, composed of PI4KA, EFR3 (EFR3A or EFR3B), TTC7 (TTC7A or TTC7B) and HYCC (HYCC1 or HYCC2).

The protein localises to the cytoplasm. It localises to the cytosol. Its subcellular location is the cell membrane. Functionally, component of a complex required to localize phosphatidylinositol 4-kinase (PI4K) to the plasma membrane. This chain is Hyccin 2, found in Homo sapiens (Human).